The primary structure comprises 752 residues: Photosystem I P700 chlorophyll a apoprotein A1 (752 aa).

A run of 8 helical transmembrane segments spans residues 73 to 96, 159 to 182, 198 to 222, 294 to 312, 349 to 372, 388 to 414, 436 to 458, and 533 to 551; these read IFSA…FHGA, LYVT…FHYH, MNHH…HVSL, RAHH…GHMY, WHAQ…HHMY, LCLF…IFMV, AIIS…LYIH, and FLVH…LILL. [4Fe-4S] cluster is bound by residues cysteine 575 and cysteine 584. The next 2 helical transmembrane spans lie at 591–612 and 666–688; these read HVFL…HFSW and LSAY…MFLF. Histidine 677 is a binding site for chlorophyll a'. Residues methionine 685 and tyrosine 693 each coordinate chlorophyll a. Position 694 (tryptophan 694) interacts with phylloquinone. Residues 726-746 traverse the membrane as a helical segment; that stretch reads AVGVAHYLLGGIATTWSFFHA.

Belongs to the PsaA/PsaB family. In terms of assembly, the PsaA/B heterodimer binds the P700 chlorophyll special pair and subsequent electron acceptors. PSI consists of a core antenna complex that captures photons, and an electron transfer chain that converts photonic excitation into a charge separation. The eukaryotic PSI reaction center is composed of at least 11 subunits. P700 is a chlorophyll a/chlorophyll a' dimer, A0 is one or more chlorophyll a, A1 is one or both phylloquinones and FX is a shared 4Fe-4S iron-sulfur center. is required as a cofactor.

Its subcellular location is the plastid. It is found in the cyanelle thylakoid membrane. It catalyses the reaction reduced [plastocyanin] + hnu + oxidized [2Fe-2S]-[ferredoxin] = oxidized [plastocyanin] + reduced [2Fe-2S]-[ferredoxin]. Functionally, psaA and PsaB bind P700, the primary electron donor of photosystem I (PSI), as well as the electron acceptors A0, A1 and FX. PSI is a cytochrome c6-ferredoxin oxidoreductase, converting photonic excitation into a charge separation, which transfers an electron from the donor P700 chlorophyll pair to the spectroscopically characterized acceptors A0, A1, FX, FA and FB in turn. Oxidized P700 is reduced on the lumenal side of the thylakoid membrane by cytochrome c6. This Cyanophora paradoxa protein is Photosystem I P700 chlorophyll a apoprotein A1.